A 248-amino-acid polypeptide reads, in one-letter code: Proteasome subunit alpha type-1 (248 aa).

It belongs to the peptidase T1A family. In terms of assembly, the 26S proteasome consists of a 20S proteasome core and two 19S regulatory subunits. The 20S proteasome core is composed of 28 subunits that are arranged in four stacked rings, resulting in a barrel-shaped structure. The two end rings are each formed by seven alpha subunits, and the two central rings are each formed by seven beta subunits. The catalytic chamber with the active sites is on the inside of the barrel.

Its subcellular location is the cytoplasm. The protein resides in the nucleus. Functionally, the proteasome is a multicatalytic proteinase complex which is characterized by its ability to cleave peptides with Arg, Phe, Tyr, Leu, and Glu adjacent to the leaving group at neutral or slightly basic pH. The proteasome has an ATP-dependent proteolytic activity. The sequence is that of Proteasome subunit alpha type-1 (psmA1) from Dictyostelium discoideum (Social amoeba).